We begin with the raw amino-acid sequence, 129 residues long: Serum amyloid A-2 protein (129 aa).

Residues 1 to 18 (MKLFTGLIFCSLVLGVSS) form the signal peptide. Residue Gln-19 is modified to Pyrrolidone carboxylic acid. Residues 92–129 (GDSGHGVEDSKADQAANEWGRSGKDPNHFRPSGLPDKY) form a disordered region.

This sequence belongs to the SAA family. In terms of assembly, apolipoprotein of the HDL complex. Expressed by the liver; secreted in plasma.

Its subcellular location is the secreted. Functionally, major acute phase reactant. This chain is Serum amyloid A-2 protein (SAA2P0DJI9), found in Neovison vison (American mink).